A 68-amino-acid chain; its full sequence is U19-ctenitoxin-Pn1a (68 aa).

Pyrrolidone carboxylic acid is present on Gln1. Intrachain disulfides connect Cys8–Cys19, Cys13–Cys28, Cys18–Cys51, Cys38–Cys59, and Cys53–Cys65.

In terms of tissue distribution, expressed by the venom gland.

The protein resides in the secreted. Non-toxic to mice and insects. The sequence is that of U19-ctenitoxin-Pn1a from Phoneutria nigriventer (Brazilian armed spider).